Here is a 335-residue protein sequence, read N- to C-terminus: Glyceraldehyde-3-phosphate dehydrogenase 1 (335 aa).

NAD(+) is bound by residues R12 to I13, D34, R78, and S120. Residues S151–T153 and T182 contribute to the D-glyceraldehyde 3-phosphate site. C152 serves as the catalytic Nucleophile. N183 provides a ligand contact to NAD(+). Residues R197, T210–G211, and R233 contribute to the D-glyceraldehyde 3-phosphate site. N315 is an NAD(+) binding site.

It belongs to the glyceraldehyde-3-phosphate dehydrogenase family. Homotetramer. Interacts with BrxC. In response to oxidative stress, the active site Cys likely reacts with bacillithiol (BSH) to form mixed disulfides to protect the Cys residue against overoxidation. S-bacillithiolation presumably leads to loss of catalytic activity. Debacillithiolation by monothiol bacilliredoxin BrxC restores the activity.

The protein localises to the cytoplasm. The catalysed reaction is D-glyceraldehyde 3-phosphate + phosphate + NAD(+) = (2R)-3-phospho-glyceroyl phosphate + NADH + H(+). The protein operates within carbohydrate degradation; glycolysis; pyruvate from D-glyceraldehyde 3-phosphate: step 1/5. Its function is as follows. Involved in the glycolysis. Catalyzes the oxidative phosphorylation of glyceraldehyde 3-phosphate (G3P) to 1,3-bisphosphoglycerate (BPG) using the cofactor NAD. The first reaction step involves the formation of a hemiacetal intermediate between G3P and a cysteine residue, and this hemiacetal intermediate is then oxidized to a thioester, with concomitant reduction of NAD to NADH. The reduced NADH is then exchanged with the second NAD, and the thioester is attacked by a nucleophilic inorganic phosphate to produce BPG. In Bacillus subtilis (strain 168), this protein is Glyceraldehyde-3-phosphate dehydrogenase 1.